The following is a 427-amino-acid chain: Inward rectifier potassium channel 2 (427 aa).

The Cytoplasmic portion of the chain corresponds to 1–81 (MGSVRTNRYS…IFTTCVDIRW (81 aa)). An S-nitrosocysteine modification is found at Cys-76. The chain crosses the membrane as a helical span at residues 82–106 (RWMLVIFCLAFVLSWLFFGCVFWLI). The Extracellular segment spans residues 107 to 128 (ALLHGDLDASKESKACVSEVNS). Residues 129–140 (FTAAFLFSIETQ) constitute an intramembrane region (helical; Pore-forming). Residues 141–147 (TTIGYGF) constitute an intramembrane region (pore-forming). The Selectivity filter motif lies at 142-147 (TIGYGF). Over 148–156 (RCVTDECPI) the chain is Extracellular. The chain crosses the membrane as a helical span at residues 157 to 178 (AVFMVVFQSIVGCIIDAFIIGA). At 179–427 (VMAKMAKPKK…PRPLRRESEI (249 aa)) the chain is on the cytoplasmic side. Residues 181–208 (AKMAKPKKRNETLVFSHNAVIAMRDGKL) form a polyphosphoinositide (PIP2)-binding region. Residues 383 to 427 (TSKEEEDSENGVPESTSTDSPPGIDLHNQASVPLEPRPLRRESEI) form a disordered region. Residues 425-427 (SEI) carry the PDZ-binding motif.

The protein belongs to the inward rectifier-type potassium channel (TC 1.A.2.1) family. KCNJ2 subfamily. Homotetramer. Homomultimeric and heteromultimeric association with KCNJ4/Kir2.3. Can form heteromeric channels with Kir2.6/KCNJ18. Associates, via its PDZ-recognition domain, with a complex containing LIN7A, LIN7B, LIN7C, DLG1, CASK and APBA1. S-nitrosylation increases the open probability and inward rectifying currents. In terms of tissue distribution, prominently expressed in the central nervous system. Also found in other excitable tissues such as heart and skeletal muscle.

Its subcellular location is the cell membrane. It is found in the sarcolemma. It localises to the T-tubule. The catalysed reaction is K(+)(in) = K(+)(out). Its activity is regulated as follows. Activated by phosphatidylinositol 4,5 biphosphate (PtdIns(4,5)P2). In terms of biological role, inward rectifier potassium channels are characterized by a greater tendency to allow potassium to flow into the cell rather than out of it. Their voltage dependence is regulated by the concentration of extracellular potassium; as external potassium is raised, the voltage range of the channel opening shifts to more positive voltages. The inward rectification is mainly due to the blockage of outward current by internal magnesium. Can be blocked by extracellular barium and cesium. Probably participates in establishing action potential waveform and excitability of neuronal and muscle tissues. In Rattus norvegicus (Rat), this protein is Inward rectifier potassium channel 2 (Kcnj2).